Consider the following 210-residue polypeptide: Probable glutathione peroxidase 8 (210 aa).

A helical transmembrane segment spans residues 13-35; that stretch reads ASRAGLFKVLLSVALCMGSLYLL.

It belongs to the glutathione peroxidase family.

The protein resides in the membrane. It catalyses the reaction 2 glutathione + H2O2 = glutathione disulfide + 2 H2O. In Danio rerio (Zebrafish), this protein is Probable glutathione peroxidase 8 (gpx8).